Here is a 105-residue protein sequence, read N- to C-terminus: ATP-dependent Clp protease adapter protein ClpS (105 aa).

This sequence belongs to the ClpS family. In terms of assembly, binds to the N-terminal domain of the chaperone ClpA.

Involved in the modulation of the specificity of the ClpAP-mediated ATP-dependent protein degradation. The sequence is that of ATP-dependent Clp protease adapter protein ClpS from Klebsiella pneumoniae (strain 342).